The primary structure comprises 83 residues: Large ribosomal subunit protein bL31B (83 aa).

Belongs to the bacterial ribosomal protein bL31 family. Type B subfamily. In terms of assembly, part of the 50S ribosomal subunit.

This chain is Large ribosomal subunit protein bL31B, found in Lacticaseibacillus casei (strain BL23) (Lactobacillus casei).